The sequence spans 72 residues: Protein P13 (72 aa).

Its subcellular location is the virion membrane. The protein is Protein P13 (P13) of Pseudomonas phage phi6 (Bacteriophage phi-6).